We begin with the raw amino-acid sequence, 595 residues long: Probable L-gulonolactone oxidase 1 (595 aa).

The signal sequence occupies residues 1 to 18 (MAFWLSLIFFCFCTFASS). An FAD-binding PCMH-type domain is found at 47-229 (SICEAAKVEY…SQVTFQLQPM (183 aa)).

It belongs to the oxygen-dependent FAD-linked oxidoreductase family. Requires FAD as cofactor.

It carries out the reaction L-gulono-1,4-lactone + O2 = L-ascorbate + H2O2 + H(+). Its pathway is cofactor biosynthesis; L-ascorbate biosynthesis. May be involved in the biosynthesis of ascorbic acid. The polypeptide is Probable L-gulonolactone oxidase 1 (Arabidopsis thaliana (Mouse-ear cress)).